Consider the following 605-residue polypeptide: Insulin-like growth factor-binding protein complex acid labile subunit (605 aa).

The first 27 residues, 1-27 (MALRKGGLALALLLLSWVALGPRSLEG), serve as a signal peptide directing secretion. An LRRNT domain is found at 32-74 (TPGEAEGPACPAACVCSYDDDADELSVFCSSRNLTRLPDGVPG). Cystine bridges form between Cys41–Cys47 and Cys45–Cys60. Asn64, Asn85, and Asn96 each carry an N-linked (GlcNAc...) asparagine glycan. 19 LRR repeats span residues 75–96 (GTQA…AFQN), 99–120 (SLGF…ALLG), 123–144 (NLCH…TFAH), 147–168 (ALAS…LFEG), 171–192 (SLWD…AFRG), 195–216 (SLRE…LFSG), 219–240 (ELRE…VFVQ), 243–264 (RLQK…AFLG), 267–288 (ALRW…TFPG), 291–312 (GLRV…TFKD), 315–336 (FLEE…SFEG), 339–360 (QLEV…AFLG), 363–384 (NVAV…VFRG), 387–408 (KLHS…TFTG), 411–432 (GLRR…SLWG), 435–456 (ELLE…LFQG), 459–480 (KLEY…ALGP), 483–504 (RAFW…LLAP), and 507–528 (RLRY…PPGL). A glycan (N-linked (GlcNAc...) asparagine) is linked at Asn368. Asn515 carries N-linked (GlcNAc...) asparagine glycosylation. Residues 536–605 (NPWDCGCPLK…DLSEAHFAPC (70 aa)) form the LRRCT domain. Disulfide bonds link Cys540-Cys583, Cys542-Cys605, and Cys566-Cys571. N-linked (GlcNAc...) asparagine glycosylation occurs at Asn580.

In terms of assembly, forms a ternary complex with IGF1 and IGFBP3. In terms of tissue distribution, plasma.

The protein resides in the secreted. The protein localises to the extracellular space. In terms of biological role, involved in protein-protein interactions that result in protein complexes, receptor-ligand binding or cell adhesion. This chain is Insulin-like growth factor-binding protein complex acid labile subunit (IGFALS), found in Homo sapiens (Human).